We begin with the raw amino-acid sequence, 308 residues long: Prephenate dehydratase (308 aa).

Residues 3–187 (RITYLGPEGT…AHTRFVLVGR (185 aa)) enclose the Prephenate dehydratase domain. Residues 201–278 (SVVLGLGNVP…EDVRYLGSWP (78 aa)) form the ACT domain.

Homodimer.

It carries out the reaction prephenate + H(+) = 3-phenylpyruvate + CO2 + H2O. The protein operates within amino-acid biosynthesis; L-phenylalanine biosynthesis; phenylpyruvate from prephenate: step 1/1. The sequence is that of Prephenate dehydratase (pheA) from Mycobacteroides abscessus (strain ATCC 19977 / DSM 44196 / CCUG 20993 / CIP 104536 / JCM 13569 / NCTC 13031 / TMC 1543 / L948) (Mycobacterium abscessus).